Consider the following 106-residue polypeptide: ATP-dependent Clp protease adapter protein ClpS (106 aa).

Belongs to the ClpS family. Binds to the N-terminal domain of the chaperone ClpA.

Involved in the modulation of the specificity of the ClpAP-mediated ATP-dependent protein degradation. The polypeptide is ATP-dependent Clp protease adapter protein ClpS (Escherichia coli O127:H6 (strain E2348/69 / EPEC)).